The following is a 486-amino-acid chain: Arginine/agmatine antiporter (486 aa).

The next 12 helical transmembrane spans lie at Leu12–Ser32, Ala41–Ala61, Gly85–Gly105, Asn129–Leu149, Ile160–Ala180, Ser211–Ala231, Ala242–Phe262, Val296–Ile316, Leu341–Thr361, Met367–Phe387, Leu418–Leu438, and Glu461–Thr481.

The protein belongs to the amino acid-polyamine-organocation (APC) superfamily. Basic amino acid/polyamine antiporter (APA) (TC 2.A.3.2) family.

Its subcellular location is the cell inner membrane. Functionally, catalyzes the exchange of L-arginine for agmatine. The arginine uptake by the bacterium in the macrophage may be a virulence factor against the host innate immune response. The sequence is that of Arginine/agmatine antiporter (aaxC) from Chlamydia caviae (strain ATCC VR-813 / DSM 19441 / 03DC25 / GPIC) (Chlamydophila caviae).